Consider the following 131-residue polypeptide: uncharacterized protein (131 aa).

Residues 1 to 67 (MCSARKLLRG…HSGEPIGDDY (67 aa)) form a disordered region. Phosphoserine is present on Ser14. A helical membrane pass occupies residues 99–119 (VVVLFFWLMLWFLGLQALGLV).

It belongs to the FAM241 family.

It is found in the membrane. This is an uncharacterized protein from Mus musculus (Mouse).